A 379-amino-acid polypeptide reads, in one-letter code: DNA-directed RNA polymerase subunit Rpo1C (379 aa).

This sequence belongs to the RNA polymerase beta' chain family. As to quaternary structure, part of the RNA polymerase complex.

Its subcellular location is the cytoplasm. The enzyme catalyses RNA(n) + a ribonucleoside 5'-triphosphate = RNA(n+1) + diphosphate. Functionally, DNA-dependent RNA polymerase (RNAP) catalyzes the transcription of DNA into RNA using the four ribonucleoside triphosphates as substrates. Forms part of the jaw domain. This is DNA-directed RNA polymerase subunit Rpo1C from Pyrobaculum aerophilum (strain ATCC 51768 / DSM 7523 / JCM 9630 / CIP 104966 / NBRC 100827 / IM2).